The chain runs to 377 residues: 4-hydroxy-3-methylbut-2-en-1-yl diphosphate synthase (flavodoxin) (377 aa).

Residues cysteine 272, cysteine 275, cysteine 307, and glutamate 314 each coordinate [4Fe-4S] cluster.

This sequence belongs to the IspG family. [4Fe-4S] cluster is required as a cofactor.

The catalysed reaction is (2E)-4-hydroxy-3-methylbut-2-enyl diphosphate + oxidized [flavodoxin] + H2O + 2 H(+) = 2-C-methyl-D-erythritol 2,4-cyclic diphosphate + reduced [flavodoxin]. Its pathway is isoprenoid biosynthesis; isopentenyl diphosphate biosynthesis via DXP pathway; isopentenyl diphosphate from 1-deoxy-D-xylulose 5-phosphate: step 5/6. Converts 2C-methyl-D-erythritol 2,4-cyclodiphosphate (ME-2,4cPP) into 1-hydroxy-2-methyl-2-(E)-butenyl 4-diphosphate. The sequence is that of 4-hydroxy-3-methylbut-2-en-1-yl diphosphate synthase (flavodoxin) from Zymomonas mobilis subsp. mobilis (strain ATCC 31821 / ZM4 / CP4).